We begin with the raw amino-acid sequence, 483 residues long: Protein nucleotidyltransferase YdiU (483 aa).

Positions 100, 102, 103, 123, 135, 136, 189, and 196 each coordinate ATP. Asp-265 (proton acceptor) is an active-site residue. Mg(2+) contacts are provided by Asn-266 and Asp-275. ATP is bound at residue Asp-275.

It belongs to the SELO family. It depends on Mg(2+) as a cofactor. The cofactor is Mn(2+).

The catalysed reaction is L-seryl-[protein] + ATP = 3-O-(5'-adenylyl)-L-seryl-[protein] + diphosphate. It catalyses the reaction L-threonyl-[protein] + ATP = 3-O-(5'-adenylyl)-L-threonyl-[protein] + diphosphate. The enzyme catalyses L-tyrosyl-[protein] + ATP = O-(5'-adenylyl)-L-tyrosyl-[protein] + diphosphate. It carries out the reaction L-histidyl-[protein] + UTP = N(tele)-(5'-uridylyl)-L-histidyl-[protein] + diphosphate. The catalysed reaction is L-seryl-[protein] + UTP = O-(5'-uridylyl)-L-seryl-[protein] + diphosphate. It catalyses the reaction L-tyrosyl-[protein] + UTP = O-(5'-uridylyl)-L-tyrosyl-[protein] + diphosphate. Functionally, nucleotidyltransferase involved in the post-translational modification of proteins. It can catalyze the addition of adenosine monophosphate (AMP) or uridine monophosphate (UMP) to a protein, resulting in modifications known as AMPylation and UMPylation. The chain is Protein nucleotidyltransferase YdiU from Gloeobacter violaceus (strain ATCC 29082 / PCC 7421).